An 86-amino-acid polypeptide reads, in one-letter code: Large ribosomal subunit protein bL27 (86 aa).

Positions 1–20 are disordered; sequence MAHKKAGGSSRNGRDSESKR.

This sequence belongs to the bacterial ribosomal protein bL27 family.

The protein is Large ribosomal subunit protein bL27 of Paraburkholderia phymatum (strain DSM 17167 / CIP 108236 / LMG 21445 / STM815) (Burkholderia phymatum).